Reading from the N-terminus, the 310-residue chain is Cell division protein FtsQ (310 aa).

The disordered stretch occupies residues 1-57 (MSEPENTAEDKDAEAAISADAVESETTADGGENPAEGESAEGPRMRARRERMERREA). Residues 1-95 (MSEPENTAED…AGRGKVQGLQ (95 aa)) are Cytoplasmic-facing. Residues 96-116 (TLLLVVLLALIAVGLGSILYF) form a helical membrane-spanning segment. Topologically, residues 117–310 (TPLMSVRQTV…VSSPDLPTVK (194 aa)) are extracellular. Positions 120 to 188 (MSVRQTVVTG…STLRVTIVER (69 aa)) constitute a POTRA domain.

It belongs to the FtsQ/DivIB family. FtsQ subfamily.

The protein resides in the cell membrane. Functionally, essential cell division protein. The polypeptide is Cell division protein FtsQ (Mycobacteroides abscessus (strain ATCC 19977 / DSM 44196 / CCUG 20993 / CIP 104536 / JCM 13569 / NCTC 13031 / TMC 1543 / L948) (Mycobacterium abscessus)).